A 362-amino-acid polypeptide reads, in one-letter code: GTP 3',8-cyclase (362 aa).

The Radical SAM core domain maps to S8 to D228. Residue R17 coordinates GTP. 2 residues coordinate [4Fe-4S] cluster: C24 and C28. Y30 contacts S-adenosyl-L-methionine. C31 is a binding site for [4Fe-4S] cluster. R71 lines the GTP pocket. S-adenosyl-L-methionine is bound at residue G75. Position 102 (T102) interacts with GTP. Residue S126 coordinates S-adenosyl-L-methionine. Residue K164 participates in GTP binding. Position 198 (M198) interacts with S-adenosyl-L-methionine. Residues C262 and C265 each contribute to the [4Fe-4S] cluster site. Residue R267–R269 participates in GTP binding. A [4Fe-4S] cluster-binding site is contributed by C279. The interval A325–G362 is disordered.

The protein belongs to the radical SAM superfamily. MoaA family. In terms of assembly, monomer and homodimer. [4Fe-4S] cluster serves as cofactor.

It catalyses the reaction GTP + AH2 + S-adenosyl-L-methionine = (8S)-3',8-cyclo-7,8-dihydroguanosine 5'-triphosphate + 5'-deoxyadenosine + L-methionine + A + H(+). It functions in the pathway cofactor biosynthesis; molybdopterin biosynthesis. Functionally, catalyzes the cyclization of GTP to (8S)-3',8-cyclo-7,8-dihydroguanosine 5'-triphosphate. The sequence is that of GTP 3',8-cyclase from Acidothermus cellulolyticus (strain ATCC 43068 / DSM 8971 / 11B).